The chain runs to 410 residues: Bifunctional enzyme IspD/IspF (410 aa).

The 2-C-methyl-D-erythritol 4-phosphate cytidylyltransferase stretch occupies residues 1 to 257; sequence MSHDPVVPSA…AGAGSASSRL (257 aa). The tract at residues 258–410 is 2-C-methyl-D-erythritol 2,4-cyclodiphosphate synthase; sequence RSGIGTDVHA…AVATALVERL (153 aa). Residues Asp264 and His266 each contribute to the a divalent metal cation site. Residues 264–266 and 290–291 contribute to the 4-CDP-2-C-methyl-D-erythritol 2-phosphate site; these read DVH and HS. Residue His298 participates in a divalent metal cation binding. 4-CDP-2-C-methyl-D-erythritol 2-phosphate contacts are provided by residues 312-314, 385-388, Phe392, and Arg395; these read DIG and TTTD.

The protein in the N-terminal section; belongs to the IspD/TarI cytidylyltransferase family. IspD subfamily. In the C-terminal section; belongs to the IspF family. A divalent metal cation is required as a cofactor.

The enzyme catalyses 2-C-methyl-D-erythritol 4-phosphate + CTP + H(+) = 4-CDP-2-C-methyl-D-erythritol + diphosphate. It catalyses the reaction 4-CDP-2-C-methyl-D-erythritol 2-phosphate = 2-C-methyl-D-erythritol 2,4-cyclic diphosphate + CMP. It participates in isoprenoid biosynthesis; isopentenyl diphosphate biosynthesis via DXP pathway; isopentenyl diphosphate from 1-deoxy-D-xylulose 5-phosphate: step 2/6. Its pathway is isoprenoid biosynthesis; isopentenyl diphosphate biosynthesis via DXP pathway; isopentenyl diphosphate from 1-deoxy-D-xylulose 5-phosphate: step 4/6. Functionally, bifunctional enzyme that catalyzes the formation of 4-diphosphocytidyl-2-C-methyl-D-erythritol from CTP and 2-C-methyl-D-erythritol 4-phosphate (MEP) (IspD), and catalyzes the conversion of 4-diphosphocytidyl-2-C-methyl-D-erythritol 2-phosphate (CDP-ME2P) to 2-C-methyl-D-erythritol 2,4-cyclodiphosphate (ME-CPP) with a corresponding release of cytidine 5-monophosphate (CMP) (IspF). The chain is Bifunctional enzyme IspD/IspF from Clavibacter michiganensis subsp. michiganensis (strain NCPPB 382).